Here is a 124-residue protein sequence, read N- to C-terminus: Small ribosomal subunit protein uS12 (124 aa).

D89 is modified (3-methylthioaspartic acid).

The protein belongs to the universal ribosomal protein uS12 family. In terms of assembly, part of the 30S ribosomal subunit. Contacts proteins S8 and S17. May interact with IF1 in the 30S initiation complex.

In terms of biological role, with S4 and S5 plays an important role in translational accuracy. Its function is as follows. Interacts with and stabilizes bases of the 16S rRNA that are involved in tRNA selection in the A site and with the mRNA backbone. Located at the interface of the 30S and 50S subunits, it traverses the body of the 30S subunit contacting proteins on the other side and probably holding the rRNA structure together. The combined cluster of proteins S8, S12 and S17 appears to hold together the shoulder and platform of the 30S subunit. The polypeptide is Small ribosomal subunit protein uS12 (Caldanaerobacter subterraneus subsp. tengcongensis (strain DSM 15242 / JCM 11007 / NBRC 100824 / MB4) (Thermoanaerobacter tengcongensis)).